Here is a 33-residue protein sequence, read N- to C-terminus: Protamine (33 aa).

The interval 1-33 is disordered; it reads MPRRRRSSSRPVRRRRRPRVSRRRRRRGGRRRR.

Testis.

It localises to the nucleus. The protein localises to the chromosome. Protamines substitute for histones in the chromatin of sperm during the haploid phase of spermatogenesis. They compact sperm DNA into a highly condensed, stable and inactive complex. The polypeptide is Protamine (Oncorhynchus keta (Chum salmon)).